The chain runs to 481 residues: Argininosuccinate lyase (481 aa).

It belongs to the lyase 1 family. Argininosuccinate lyase subfamily.

Its subcellular location is the cytoplasm. The enzyme catalyses 2-(N(omega)-L-arginino)succinate = fumarate + L-arginine. It functions in the pathway amino-acid biosynthesis; L-arginine biosynthesis; L-arginine from L-ornithine and carbamoyl phosphate: step 3/3. The polypeptide is Argininosuccinate lyase (Methanococcus maripaludis (strain C7 / ATCC BAA-1331)).